A 183-amino-acid chain; its full sequence is Small ribosomal subunit protein bS16 (183 aa).

The span at 149 to 161 shows a compositional bias: basic and acidic residues; it reads EKKAAEAAAKAEA. The interval 149 to 183 is disordered; that stretch reads EKKAAEAAAKAEAEAANAPAEEAPAAEATEAPAEA. Low complexity predominate over residues 162–183; the sequence is EAANAPAEEAPAAEATEAPAEA.

This sequence belongs to the bacterial ribosomal protein bS16 family.

This is Small ribosomal subunit protein bS16 from Phocaeicola vulgatus (strain ATCC 8482 / DSM 1447 / JCM 5826 / CCUG 4940 / NBRC 14291 / NCTC 11154) (Bacteroides vulgatus).